Here is a 267-residue protein sequence, read N- to C-terminus: 4-hydroxy-tetrahydrodipicolinate reductase (267 aa).

NAD(+)-binding positions include 8 to 13 (GAAGRM) and aspartate 34. Arginine 35 serves as a coordination point for NADP(+). NAD(+) contacts are provided by residues 98-100 (GTT) and 122-125 (AANF). The active-site Proton donor/acceptor is the histidine 155. Residue histidine 156 coordinates (S)-2,3,4,5-tetrahydrodipicolinate. Lysine 159 serves as the catalytic Proton donor. Position 165–166 (165–166 (GT)) interacts with (S)-2,3,4,5-tetrahydrodipicolinate.

The protein belongs to the DapB family.

The protein resides in the cytoplasm. It catalyses the reaction (S)-2,3,4,5-tetrahydrodipicolinate + NAD(+) + H2O = (2S,4S)-4-hydroxy-2,3,4,5-tetrahydrodipicolinate + NADH + H(+). The enzyme catalyses (S)-2,3,4,5-tetrahydrodipicolinate + NADP(+) + H2O = (2S,4S)-4-hydroxy-2,3,4,5-tetrahydrodipicolinate + NADPH + H(+). It participates in amino-acid biosynthesis; L-lysine biosynthesis via DAP pathway; (S)-tetrahydrodipicolinate from L-aspartate: step 4/4. Catalyzes the conversion of 4-hydroxy-tetrahydrodipicolinate (HTPA) to tetrahydrodipicolinate. The polypeptide is 4-hydroxy-tetrahydrodipicolinate reductase (Pseudomonas putida (strain W619)).